A 103-amino-acid chain; its full sequence is c-Myc-binding protein (103 aa).

It belongs to the AMY1 family. Binds via its C-terminal region to the N-terminal region of MYC. Associates with AKAP1/S-AKAP84. Interacts with MYCBPAP. Interacts with CFAP91.

The protein localises to the cytoplasm. It localises to the nucleus. In terms of biological role, may control the transcriptional activity of MYC. Stimulates the activation of E box-dependent transcription by MYC. The sequence is that of c-Myc-binding protein (Mycbp) from Mus musculus (Mouse).